Reading from the N-terminus, the 276-residue chain is Large ribosomal subunit protein uL2 (276 aa).

Residues 225–276 (MNPVDHPHGGGEGRAPVGRKHPVTPWGKPAMGAKTRKKRKLSDKLIVKPRNK) are disordered. Positions 258-276 (KTRKKRKLSDKLIVKPRNK) are enriched in basic residues.

This sequence belongs to the universal ribosomal protein uL2 family. In terms of assembly, part of the 50S ribosomal subunit. Forms a bridge to the 30S subunit in the 70S ribosome.

Functionally, one of the primary rRNA binding proteins. Required for association of the 30S and 50S subunits to form the 70S ribosome, for tRNA binding and peptide bond formation. It has been suggested to have peptidyltransferase activity; this is somewhat controversial. Makes several contacts with the 16S rRNA in the 70S ribosome. This Moorella thermoacetica (strain ATCC 39073 / JCM 9320) protein is Large ribosomal subunit protein uL2.